The following is a 403-amino-acid chain: Argininosuccinate synthase (403 aa).

8–16 (AYSGGLDTS) is a binding site for ATP. Position 87 (Y87) interacts with L-citrulline. G117 lines the ATP pocket. Residues T119, N123, and D124 each coordinate L-aspartate. Residue N123 coordinates L-citrulline. The L-citrulline site is built by R127, S175, E259, and Y271.

Belongs to the argininosuccinate synthase family. Type 1 subfamily. In terms of assembly, homotetramer.

Its subcellular location is the cytoplasm. It catalyses the reaction L-citrulline + L-aspartate + ATP = 2-(N(omega)-L-arginino)succinate + AMP + diphosphate + H(+). It participates in amino-acid biosynthesis; L-arginine biosynthesis; L-arginine from L-ornithine and carbamoyl phosphate: step 2/3. The sequence is that of Argininosuccinate synthase from Salinispora arenicola (strain CNS-205).